The chain runs to 691 residues: Solute carrier organic anion transporter family member 1B1 (691 aa).

Over 1 to 28 (MDQNQHLNKTAEAQPSENKKTRYCNGLK) the chain is Cytoplasmic. A helical transmembrane segment spans residues 29–48 (MFLAALSLSFIAKTLGAIIM). The Extracellular segment spans residues 49–67 (KSSIIHIERRFEISSSLVG). The chain crosses the membrane as a helical span at residues 68 to 88 (FIDGSFEIGNLLVIVFVSYFG). Residues 89 to 94 (SKLHRP) lie on the Cytoplasmic side of the membrane. Residues 95-119 (KLIGIGCFIMGIGGVLTALPHFFMG) traverse the membrane as a helical segment. Topologically, residues 120 to 168 (YYRYSKETNINSSENSTSTLSTCLINQILSLNRASPEIVGKGCLKESGS) are extracellular. 2 N-linked (GlcNAc...) asparagine glycosylation sites follow: asparagine 130 and asparagine 134. A helical membrane pass occupies residues 169–197 (YMWIYVFMGNMLRGIGETPIVPLGLSYID). Topologically, residues 198–216 (DFAKEGHSSLYLGILNAIA) are cytoplasmic. The helical transmembrane segment at 217-237 (MIGPIIGFTLGSLFSKMYVDI) threads the bilayer. Over 238-255 (GYVDLSTIRITPTDSRWV) the chain is Extracellular. The chain crosses the membrane as a helical span at residues 256-280 (GAWWLNFLVSGLFSIISSIPFFFLP). Residues 281-331 (QTPNKPQKERKASLSLHVLETNDEKDQTANLTNQGKNITKNVTGFFQSFKS) are Cytoplasmic-facing. Phosphoserine is present on residues serine 293 and serine 295. The chain crosses the membrane as a helical span at residues 332–353 (ILTNPLYVMFVLLTLLQVSSYI). The Extracellular portion of the chain corresponds to 354–373 (GAFTYVFKYVEQQYGQPSSK). Residues 374-397 (ANILLGVITIPIFASGMFLGGYII) form a helical membrane-spanning segment. The Cytoplasmic segment spans residues 398–401 (KKFK). Residues 402–425 (LNTVGIAKFSCFTAVMSLSFYLLY) traverse the membrane as a helical segment. Residues 426-537 (FFILCENKSV…DACTRKFYFF (112 aa)) are Extracellular-facing. An N-linked (GlcNAc...) asparagine glycan is attached at asparagine 432. The Kazal-like domain occupies 453 to 508 (DVPLSYCNSDCNCDESQWEPVCGNNGITYISPCLAGCKSSSGNKKPIVFYNCSCLE). Cystine bridges form between cysteine 459/cysteine 489, cysteine 465/cysteine 485, and cysteine 474/cysteine 506. N-linked (GlcNAc...) asparagine glycans are attached at residues asparagine 503 and asparagine 516. The helical transmembrane segment at 538 to 560 (VAIQVLNLFFSALGGTSHVMLIV) threads the bilayer. Residues 561-569 (KIVQPELKS) are Cytoplasmic-facing. Residues 570–595 (LALGFHSMVIRALGGILAPIYFGALI) traverse the membrane as a helical segment. Residues 596 to 629 (DTTCIKWSTNNCGTRGSCRTYNSTSFSRVYLGLS) lie on the Extracellular side of the membrane. N-linked (GlcNAc...) asparagine glycosylation is present at asparagine 617. A helical membrane pass occupies residues 630 to 647 (SMLRVSSLVLYIILIYAM). Topologically, residues 648–691 (KKKYQEKDINASENGSVMDEANLESLNKNKHFVPSAGADSETHC) are cytoplasmic. Phosphoserine occurs at positions 672 and 682.

This sequence belongs to the organo anion transporter (TC 2.A.60) family. Highly expressed in liver, at the basolateral membranes of centrilobular hepatocytes. Expressed in liver (at protein level). Expressed in fetal liver. Not detected in heart, brain, placenta, lung, skeletal muscle, kidney, pancreas, spleen, thymus, prostate, testis, ovary, small intestine, colon and leukocyte. In testis, primarily localized to the basal membrane of Sertoli cells and weakly expressed in Leydig cells and within the tubules.

The protein localises to the basolateral cell membrane. Its subcellular location is the basal cell membrane. It carries out the reaction taurocholate(out) = taurocholate(in). The catalysed reaction is dehydroepiandrosterone 3-sulfate(out) = dehydroepiandrosterone 3-sulfate(in). It catalyses the reaction estrone 3-sulfate(out) = estrone 3-sulfate(in). The enzyme catalyses 3,3',5'-triiodo-L-thyronine(out) = 3,3',5'-triiodo-L-thyronine(in). It carries out the reaction L-thyroxine(out) = L-thyroxine(in). The catalysed reaction is prostaglandin E2(out) = prostaglandin E2(in). It catalyses the reaction thromboxane B2(out) = thromboxane B2(in). The enzyme catalyses 17beta-estradiol 17-O-(beta-D-glucuronate)(out) = 17beta-estradiol 17-O-(beta-D-glucuronate)(in). It carries out the reaction leukotriene C4(out) = leukotriene C4(in). The catalysed reaction is leukotriene E4(out) = leukotriene E4(in). It catalyses the reaction (4E,15E)-bilirubin IXalpha C8-beta-D-glucuronoside(out) = (4E,15E)-bilirubin IXalpha C8-beta-D-glucuronoside(in). The enzyme catalyses bilirubin IXalpha bis-beta-D-glucuronoside(out) = bilirubin IXalpha bis-beta-D-glucuronoside(in). Its function is as follows. Mediates the Na(+)-independent uptake of organic anions. Shows broad substrate specificity, can transport both organic anions such as bile acid taurocholate (cholyltaurine) and conjugated steroids (dehydroepiandrosterone 3-sulfate, 17-beta-glucuronosyl estradiol, and estrone 3-sulfate), as well as eicosanoids (prostaglandin E2, thromboxane B2, leukotriene C4, and leukotriene E4), and thyroid hormones (T4/L-thyroxine, and T3/3,3',5'-triiodo-L-thyronine). Can take up bilirubin glucuronides from plasma into the liver, contributing to the detoxification-enhancing liver-blood shuttling loop. Involved in the clearance of endogenous and exogenous substrates from the liver. Transports coproporphyrin I and III, by-products of heme synthesis, and may be involved in their hepatic disposition. May contribute to regulate the transport of organic compounds in testes across the blood-testis-barrier. Can transport HMG-CoA reductase inhibitors (also known as statins), such as pravastatin and pitavastatin, a clinically important class of hypolipidemic drugs. May play an important role in plasma and tissue distribution of the structurally diverse chemotherapeutic drug methotrexate. May also transport antihypertension agents, such as the angiotensin-converting enzyme (ACE) inhibitor prodrug enalapril, and the highly selective angiotensin II AT1-receptor antagonist valsartan, in the liver. Shows a pH-sensitive substrate specificity towards prostaglandin E2 and T4 which may be ascribed to the protonation state of the binding site and leads to a stimulation of substrate transport in an acidic microenvironment. Hydrogencarbonate/HCO3(-) acts as the probable counteranion that exchanges for organic anions. In Homo sapiens (Human), this protein is Solute carrier organic anion transporter family member 1B1 (SLCO1B1).